The sequence spans 386 residues: ATP phosphoribosyltransferase regulatory subunit (386 aa).

Belongs to the class-II aminoacyl-tRNA synthetase family. HisZ subfamily. As to quaternary structure, heteromultimer composed of HisG and HisZ subunits.

The protein localises to the cytoplasm. Its pathway is amino-acid biosynthesis; L-histidine biosynthesis; L-histidine from 5-phospho-alpha-D-ribose 1-diphosphate: step 1/9. Its function is as follows. Required for the first step of histidine biosynthesis. May allow the feedback regulation of ATP phosphoribosyltransferase activity by histidine. The chain is ATP phosphoribosyltransferase regulatory subunit from Limosilactobacillus fermentum (strain NBRC 3956 / LMG 18251) (Lactobacillus fermentum).